Consider the following 525-residue polypeptide: D-3-phosphoglycerate dehydrogenase (525 aa).

NAD(+) is bound by residues 148–149, Asp-168, Thr-200, 227–229, and Asp-253; these read RI and CAR. Arg-229 is a catalytic residue. The active site involves Glu-258. The Proton donor role is filled by His-276. 276 to 279 provides a ligand contact to NAD(+); sequence HLGA. The 73-residue stretch at 452-524 folds into the ACT domain; it reads LVYIQHQDTT…DIVSVKLIDL (73 aa).

Belongs to the D-isomer specific 2-hydroxyacid dehydrogenase family.

It catalyses the reaction (2R)-3-phosphoglycerate + NAD(+) = 3-phosphooxypyruvate + NADH + H(+). It carries out the reaction (R)-2-hydroxyglutarate + NAD(+) = 2-oxoglutarate + NADH + H(+). It functions in the pathway amino-acid biosynthesis; L-serine biosynthesis; L-serine from 3-phospho-D-glycerate: step 1/3. Its activity is regulated as follows. In bacteria displays feedback inhibition by L-serine. In terms of biological role, catalyzes the reversible oxidation of 3-phospho-D-glycerate to 3-phosphonooxypyruvate, the first step of the phosphorylated L-serine biosynthesis pathway. Also catalyzes the reversible oxidation of 2-hydroxyglutarate to 2-oxoglutarate. This chain is D-3-phosphoglycerate dehydrogenase (serA), found in Bacillus subtilis (strain 168).